A 296-amino-acid polypeptide reads, in one-letter code: MSMLPTFGFTQEQVACVCEVLQQGGNIERLGRFLWSLPACEHLHKNESVLKAKAVVAFHRGNFRELYKILESHQFSPHNHAKLQQLWLKAHYIEAEKLRGRPLGAVGKYRVRRKFPLPRSIWDGEETSYCFKEKSRSVLREWYAHNPYPSPREKRELAEATGLTTTQVSNWFKNRRQRDRAAEAKERENSENSNSSSHNPLASSLNGSGKSVLGSSEDEKTPSGTPDHSSSSPALLLSPPPPPGLPSLHSLGHPPGPSAVPVPVPGGGGADPLQHHHSLQDSILNPMSANLVDLGS.

The homeobox DNA-binding region spans 124-183; it reads GEETSYCFKEKSRSVLREWYAHNPYPSPREKRELAEATGLTTTQVSNWFKNRRQRDRAAE. Residues 168–284 form a disordered region; the sequence is VSNWFKNRRQ…HHHSLQDSIL (117 aa). Over residues 179–190 the composition is skewed to basic and acidic residues; the sequence is DRAAEAKERENS. Composition is skewed to low complexity over residues 191-206 and 228-237; these read ENSN…SSLN and HSSSSPALLL. Residues 254-264 are compositionally biased toward pro residues; sequence PPGPSAVPVPV.

This sequence belongs to the SIX/Sine oculis homeobox family. In terms of assembly, interacts with TCF7L2; in a canonical Wnt signaling independent manner; prevents transcription of differentiation genes in cap mesenchyme. Interacts with OSR1; form a strong repressor complex with TCF7L2, TLE2 and TLE3 to prevent the activation of Wnt/beta-catenin target genes in the cap mesenchyme. Interacts with HOXA11, EYA1 and EYA3. As to expression, expressed in phalangeal tendons, in smooth muscle and in head and body mesenchyme.

The protein localises to the nucleus. Transcription factor that plays an important role in the development of several organs, including kidney, skull and stomach. During kidney development, maintains cap mesenchyme multipotent nephron progenitor cells in an undifferentiated state by opposing the inductive signals emanating from the ureteric bud and cooperates with WNT9B to promote renewing progenitor cells proliferation. Acts through its interaction with TCF7L2 and OSR1 in a canonical Wnt signaling independent manner preventing transcription of differentiation genes in cap mesenchyme such as WNT4. Also acts independently of OSR1 to activate expression of many cap mesenchyme genes, including itself, GDNF and OSR1. During craniofacial development plays a role in growth and elongation of the cranial base through regulation of chondrocyte differentiation. During stomach organogenesis, controls pyloric sphincter formation and mucosal growth through regulation of a gene network including NKX2-5, BMPR1B, BMP4, SOX9 and GREM1. During branchial arch development, acts to mediate HOXA2 control over the insulin-like growth factor pathway. May also be involved in limb tendon and ligament development. Plays a role in cell proliferation and migration. This Mus musculus (Mouse) protein is Homeobox protein SIX2 (Six2).